A 155-amino-acid polypeptide reads, in one-letter code: uncharacterized protein (155 aa).

An N-terminal signal peptide occupies residues 1-23 (MRLMRNLMNALLLGAAASSLAVA). Residues C86 and C91 are joined by a disulfide bond.

It belongs to the ivy family.

The protein resides in the periplasm. This is an uncharacterized protein from Pseudomonas aeruginosa (strain ATCC 15692 / DSM 22644 / CIP 104116 / JCM 14847 / LMG 12228 / 1C / PRS 101 / PAO1).